The chain runs to 284 residues: L-ribulose-5-phosphate 3-epimerase UlaE (284 aa).

It belongs to the L-ribulose-5-phosphate 3-epimerase family.

It catalyses the reaction L-ribulose 5-phosphate = L-xylulose 5-phosphate. It functions in the pathway cofactor degradation; L-ascorbate degradation; D-xylulose 5-phosphate from L-ascorbate: step 3/4. Functionally, catalyzes the isomerization of L-xylulose-5-phosphate to L-ribulose-5-phosphate. Is involved in the anaerobic L-ascorbate utilization. In Salmonella typhi, this protein is L-ribulose-5-phosphate 3-epimerase UlaE.